A 344-amino-acid chain; its full sequence is L-rhamnose-proton symporter (344 aa).

10 helical membrane passes run 4–24 (AITMGIFWHLIGAASAACFYA), 38–58 (WSVGGIVSWIILPWAISALLL), 68–88 (FSLSTLLPVFLFGAMWGIGNI), 101–121 (MGIGIAIGITLIVGTLMTPII), 137–157 (TLLGVLVALIGVGIVTRAGQL), 175–195 (LVLAVMCGIFSAGMSFAMNAA), 214–234 (LPSYVVIMGGGAIINLGFCFI), 259–279 (VLLSALGGLMWYLQFFFYAWG), 290–310 (ISWMLHMSFYVLCGGIVGLVL), and 323–343 (VLSLGCVVIIVAANIVGMGMA).

Belongs to the L-rhamnose transporter (TC 2.A.7.6) family.

Its subcellular location is the cell inner membrane. It carries out the reaction L-rhamnopyranose(in) + H(+)(in) = L-rhamnopyranose(out) + H(+)(out). Functionally, uptake of L-rhamnose across the cytoplasmic membrane with the concomitant transport of protons into the cell (symport system). This chain is L-rhamnose-proton symporter, found in Escherichia coli O17:K52:H18 (strain UMN026 / ExPEC).